The following is a 727-amino-acid chain: Elongation factor 2 (727 aa).

One can recognise a tr-type G domain in the interval 19-260 (DQIRNIGICA…MVVTHLPNPV (242 aa)). GTP contacts are provided by residues 28–35 (AHIDHGKT), 94–98 (DTPGH), and 148–151 (NKVD). The residue at position 603 (His-603) is a Diphthamide.

It belongs to the TRAFAC class translation factor GTPase superfamily. Classic translation factor GTPase family. EF-G/EF-2 subfamily.

The protein resides in the cytoplasm. In terms of biological role, catalyzes the GTP-dependent ribosomal translocation step during translation elongation. During this step, the ribosome changes from the pre-translocational (PRE) to the post-translocational (POST) state as the newly formed A-site-bound peptidyl-tRNA and P-site-bound deacylated tRNA move to the P and E sites, respectively. Catalyzes the coordinated movement of the two tRNA molecules, the mRNA and conformational changes in the ribosome. The protein is Elongation factor 2 of Methanococcus aeolicus (strain ATCC BAA-1280 / DSM 17508 / OCM 812 / Nankai-3).